The primary structure comprises 206 residues: Adenylate kinase (206 aa).

The segment at 1-21 is disordered; it reads MSQPKILLLGAPGAGKGTQSS. 13–18 provides a ligand contact to ATP; that stretch reads GAGKGT. The segment at 33-61 is NMP; sequence TTGDALRANKDMETEHGTPREFMEAGELV. Residues T34, R39, 59–61, 84–87, and Q91 each bind AMP; these read ELV and GYPR. Residues 120-153 form an LID region; the sequence is GRRMDPETGDIYHTEFNMPDDEEVRERLVQRDDD. Residues R121 and 130-131 contribute to the ATP site; that span reads IY. Residues R150 and R161 each coordinate AMP. ATP is bound at residue A189.

This sequence belongs to the adenylate kinase family. Monomer.

It is found in the cytoplasm. The enzyme catalyses AMP + ATP = 2 ADP. The protein operates within purine metabolism; AMP biosynthesis via salvage pathway; AMP from ADP: step 1/1. Functionally, catalyzes the reversible transfer of the terminal phosphate group between ATP and AMP. Plays an important role in cellular energy homeostasis and in adenine nucleotide metabolism. The polypeptide is Adenylate kinase (Natronomonas pharaonis (strain ATCC 35678 / DSM 2160 / CIP 103997 / JCM 8858 / NBRC 14720 / NCIMB 2260 / Gabara) (Halobacterium pharaonis)).